The chain runs to 41 residues: MRTTLLLLIIAITVMVFVSEAYAAPAPEPILKQGTIESLTR.

A signal peptide spans 1–29; that stretch reads MRTTLLLLIIAITVMVFVSEAYAAPAPEP.

This sequence belongs to the caterpillar 11 family. As to expression, expressed by the venom apparatus.

The protein resides in the secreted. Its function is as follows. Probable toxin. This Megalopyge opercularis (Southern flannel moth) protein is U-megalopygitoxin(11)-Mo28.